We begin with the raw amino-acid sequence, 455 residues long: EP1-like glycoprotein 2 (455 aa).

Residues 1–22 form the signal peptide; sequence MSRFAILVTLALAIATVSVVIA. A Bulb-type lectin domain is found at 44–163; the sequence is EYDASYRFIE…NGKFVWQSFD (120 aa). Residues asparagine 56, asparagine 106, asparagine 191, asparagine 211, asparagine 241, and asparagine 289 are each glycosylated (N-linked (GlcNAc...) asparagine). S-nitrosocysteine is present on cysteine 374. Residues 374–455 form the PAN domain; sequence CSGVKGKTVN…NTSSVAYIKY (82 aa). Intrachain disulfides connect cysteine 410–cysteine 432 and cysteine 414–cysteine 420. Asparagine 446 carries N-linked (GlcNAc...) asparagine glycosylation.

The protein localises to the secreted. It is found in the cell wall. This chain is EP1-like glycoprotein 2, found in Arabidopsis thaliana (Mouse-ear cress).